We begin with the raw amino-acid sequence, 83 residues long: Normal mucosa of esophagus-specific gene 1 protein (83 aa).

It belongs to the complex I NDUFA4 subunit family.

The protein localises to the nucleus. In Rattus norvegicus (Rat), this protein is Normal mucosa of esophagus-specific gene 1 protein (Nmes1).